A 154-amino-acid chain; its full sequence is Pseudo histidine-containing phosphotransfer protein 6 (154 aa).

N-acetylmethionine is present on Met1. The HPt domain maps to 41-137 (SPNFVYDVIN…HYLKNMMHEL (97 aa)).

As to quaternary structure, interacts with AHK5.

Its subcellular location is the cytoplasm. It localises to the cytosol. The protein localises to the nucleus. Functions as a two-component phosphorelay mediator between cytokinin sensor histidine kinases and response regulators (B-type ARRs). Plays an important role in propagating cytokinin signal transduction. The sequence is that of Pseudo histidine-containing phosphotransfer protein 6 (AHP6) from Arabidopsis thaliana (Mouse-ear cress).